The sequence spans 498 residues: Lysine--tRNA ligase (498 aa).

Residues Glu409 and Glu416 each coordinate Mg(2+).

It belongs to the class-II aminoacyl-tRNA synthetase family. In terms of assembly, homodimer. It depends on Mg(2+) as a cofactor.

The protein resides in the cytoplasm. It carries out the reaction tRNA(Lys) + L-lysine + ATP = L-lysyl-tRNA(Lys) + AMP + diphosphate. The sequence is that of Lysine--tRNA ligase from Coxiella burnetii (strain CbuK_Q154) (Coxiella burnetii (strain Q154)).